The chain runs to 93 residues: NADH-ubiquinone oxidoreductase chain 4L (93 aa).

3 helical membrane-spanning segments follow: residues 1–21 (MVWM…VIFR), 29–49 (LFVG…VFLM), and 54–74 (LILL…ALLV).

This sequence belongs to the complex I subunit 4L family.

It is found in the mitochondrion membrane. The catalysed reaction is a ubiquinone + NADH + 5 H(+)(in) = a ubiquinol + NAD(+) + 4 H(+)(out). Its function is as follows. Core subunit of the mitochondrial membrane respiratory chain NADH dehydrogenase (Complex I) that is believed to belong to the minimal assembly required for catalysis. Complex I functions in the transfer of electrons from NADH to the respiratory chain. The immediate electron acceptor for the enzyme is believed to be ubiquinone. In Mytilus edulis (Blue mussel), this protein is NADH-ubiquinone oxidoreductase chain 4L (ND4L).